A 313-amino-acid chain; its full sequence is Ribosomal RNA small subunit methyltransferase H (313 aa).

Residues 35 to 37 (GGH), Asp-55, Phe-79, Asp-101, and Gln-108 each bind S-adenosyl-L-methionine.

The protein belongs to the methyltransferase superfamily. RsmH family.

Its subcellular location is the cytoplasm. It catalyses the reaction cytidine(1402) in 16S rRNA + S-adenosyl-L-methionine = N(4)-methylcytidine(1402) in 16S rRNA + S-adenosyl-L-homocysteine + H(+). In terms of biological role, specifically methylates the N4 position of cytidine in position 1402 (C1402) of 16S rRNA. The sequence is that of Ribosomal RNA small subunit methyltransferase H from Klebsiella pneumoniae subsp. pneumoniae (strain ATCC 700721 / MGH 78578).